Here is a 520-residue protein sequence, read N- to C-terminus: Cytochrome P450 716A67 (520 aa).

The chain crosses the membrane as a helical span at residues 4 to 24 (SLAIYYGIILITVTLGLVYTW). Position 466 (Cys-466) interacts with heme.

Belongs to the cytochrome P450 family. The cofactor is heme.

Its subcellular location is the membrane. Functionally, catalyzes hydroxylation at the C-2 position of different intermediates of the hemolytic sapogenin biosynthetic pathway downstream of oleanolic acid synthesis. This Medicago truncatula (Barrel medic) protein is Cytochrome P450 716A67.